The following is a 238-amino-acid chain: Protein A47 (238 aa).

It belongs to the orthopoxvirus A47 protein family.

The chain is Protein A47 from Vaccinia virus (strain Ankara) (VACV).